The following is a 417-amino-acid chain: Putative competence-damage inducible protein (417 aa).

It belongs to the CinA family.

The protein is Putative competence-damage inducible protein of Leuconostoc citreum (strain KM20).